We begin with the raw amino-acid sequence, 1128 residues long: MTSLRRGNICWVAVCAALLTLTRGIDVIAKPSRTPSNGDVQLVGGASPAEGRVEVFYNGAWGTVCDDGWEMQDAQIVCKQLGFASANSTRCCASFGQGTGVIILDDLACTGDETRIGDCPHRGWEQHNCAHTEDAGVVCNGKVRLAGSPNPLQGRLEIFHEGEWGTVCDSDWDLKDASVVCRQLGYPSANSSSNVSFGPASTAQILLDRVSCMGDEHGVEYCEHGDWKNVSADCTHSRDAGVICTRPIRLVGGNGPMQGRVEILHNGEWGSVCDKGWSFQNAVVVCNQLGATQPRRPQGVPVGGGVGPTHMSFVNCDGTEATLEQCSNSGWGNAGECGHSNDAGVICTPAVRLVGGNTHIEGRVEVFNNGQWGSICPESWDAKDAEVACRQLGNYPLAEGDCCPQFPADVGVVLDNVVCTGNESRIQDCAHQDWGVVDCSGGQAAGAKCQATVQLVGGSHPLEGNVIVLRNGRWGSICDDNWDINDARVVCRQLGNYEAVAATCCAKYGQVPQEIILDDVACQGEEGRIEDCYHATWGSHNCGGSESAGVVCREIRLALDDSSSNLPKGRVEIVYNGVWGRICGTDWDLNDANVLCRQLYNSTAESVHSFKNGSGPILLSNFKCTGSESNIFDCTHNPWGDYTCDDADAAVVCRGGLRLAGGRTPLEGRVEVFHDGQWGTVCDDGWDLLDAKVVCTQLGNYEALSAKCCANFGQGTGPILIDGLACNGNEDLIEDCRHEGWGSHNCQHYEDAGVVCTDLRLTHENGSVSTNTLTGRVEVLSSSGEWGAICGKYWDKKDAEVVCQQLFNTSAMDTRKFYLSSPDQLINMGEVQCNGSESLLLQCPRASKPFTAQTCPGGETAGVLCKDIRLVSGNQREFGAVELLVDSQWGSICADNWGPNEGAVACKQLGYCAAKGTQKGLQPARTQGKMHFSSMNCTGSESRLRDCVHTYGGYTCNGLVFEAVVQCKAGCDWPGPIRHGSFSPNRSSYDPLTTIDVKCDAGYELMGSKTLQCVTGCDWSRPTPECQRISNCSIGGGGKPSVGAQAGPAGGVMLIIGIILGAVVMMLIACVALYLKGRNKNIGRGNPATTSAIWKPKKEFDELKEPVLSFSAMTAGGAGPEDGMGEDI.

The signal sequence occupies residues 1-24 (MTSLRRGNICWVAVCAALLTLTRG). Over 25-1051 (IDVIAKPSRT…VGAQAGPAGG (1027 aa)) the chain is Extracellular. SRCR domains follow at residues 40–140 (VQLV…VVCN), 143–245 (VRLA…VICT), 248–348 (IRLV…VICT), 351–450 (VRLV…AKCQ), 453–553 (VQLV…VVCR), 555–654 (IRLA…VVCR), 657–757 (LRLA…VVCT), 759–866 (LRLT…VLCK), and 868–968 (IRLV…VQCK). Disulfide bonds link C65–C129, C78–C139, C109–C119, C168–C234, C181–C244, C212–C222, C273–C337, C286–C347, C316–C326, C376–C439, C389–C449, C419–C429, C478–C542, C491–C552, C522–C532, C583–C644, C596–C653, C624–C634, C682–C746, C695–C756, and C726–C736. An N-linked (GlcNAc...) asparagine glycan is attached at N87. Residues N190 and N194 are each glycosylated (N-linked (GlcNAc...) asparagine). N-linked (GlcNAc...) asparagine glycosylation is present at N229. An N-linked (GlcNAc...) asparagine glycan is attached at N422. N-linked (GlcNAc...) asparagine glycosylation is found at N601 and N612. N765, N808, N834, and N936 each carry an N-linked (GlcNAc...) asparagine glycan. 6 cysteine pairs are disulfide-bonded: C803-C865, C833-C843, C906-C967, C937-C947, C971-C1013, and C999-C1026. The 60-residue stretch at 969–1028 (AGCDWPGPIRHGSFSPNRSSYDPLTTIDVKCDAGYELMGSKTLQCVTGCDWSRPTPECQR) folds into the Sushi domain. N985 carries N-linked (GlcNAc...) asparagine glycosylation. N1031 carries N-linked (GlcNAc...) asparagine glycosylation. Residues 1052 to 1072 (VMLIIGIILGAVVMMLIACVA) traverse the membrane as a helical segment. The Cytoplasmic portion of the chain corresponds to 1073–1128 (LYLKGRNKNIGRGNPATTSAIWKPKKEFDELKEPVLSFSAMTAGGAGPEDGMGEDI).

As to expression, from the mid-gastrula stage, expressed only in mesenchyme cells that are migrating toward the body wall. At the brachiolaria stage, expressed in presumptive coelomocytes of the coelomic pouch. Also expressed in adult coelomocytes (at protein level).

The protein localises to the cytoplasmic vesicle membrane. Involved in aggregate formation and phagocytosis by larval mesenchyme cells and adult coelomocytes. Binds to bacteria and may act as an opsonin in the innate immune system. The polypeptide is Scavenger receptor cysteine-rich domain superfamily protein (Patiria pectinifera (Starfish)).